We begin with the raw amino-acid sequence, 513 residues long: Glutamyl-tRNA(Gln) amidotransferase subunit A (513 aa).

Active-site charge relay system residues include K85 and S160. The active-site Acyl-ester intermediate is the S184.

This sequence belongs to the amidase family. GatA subfamily. In terms of assembly, heterotrimer of A, B and C subunits.

It carries out the reaction L-glutamyl-tRNA(Gln) + L-glutamine + ATP + H2O = L-glutaminyl-tRNA(Gln) + L-glutamate + ADP + phosphate + H(+). Allows the formation of correctly charged Gln-tRNA(Gln) through the transamidation of misacylated Glu-tRNA(Gln) in organisms which lack glutaminyl-tRNA synthetase. The reaction takes place in the presence of glutamine and ATP through an activated gamma-phospho-Glu-tRNA(Gln). The protein is Glutamyl-tRNA(Gln) amidotransferase subunit A of Bifidobacterium longum subsp. infantis (strain ATCC 15697 / DSM 20088 / JCM 1222 / NCTC 11817 / S12).